Here is a 186-residue protein sequence, read N- to C-terminus: Ribosome-recycling factor (186 aa).

The protein belongs to the RRF family.

The protein resides in the cytoplasm. Functionally, responsible for the release of ribosomes from messenger RNA at the termination of protein biosynthesis. May increase the efficiency of translation by recycling ribosomes from one round of translation to another. This is Ribosome-recycling factor from Allorhizobium ampelinum (strain ATCC BAA-846 / DSM 112012 / S4) (Agrobacterium vitis (strain S4)).